An 87-amino-acid polypeptide reads, in one-letter code: Phosphoribosyl-ATP pyrophosphatase (87 aa).

This sequence belongs to the PRA-PH family.

It is found in the cytoplasm. It carries out the reaction 1-(5-phospho-beta-D-ribosyl)-ATP + H2O = 1-(5-phospho-beta-D-ribosyl)-5'-AMP + diphosphate + H(+). The protein operates within amino-acid biosynthesis; L-histidine biosynthesis; L-histidine from 5-phospho-alpha-D-ribose 1-diphosphate: step 2/9. This is Phosphoribosyl-ATP pyrophosphatase from Bifidobacterium longum (strain DJO10A).